The following is a 253-amino-acid chain: Ubiquinone biosynthesis O-methyltransferase (253 aa).

S-adenosyl-L-methionine is bound by residues Arg-47, Gly-78, Asp-99, and Met-141.

Belongs to the methyltransferase superfamily. UbiG/COQ3 family.

The enzyme catalyses a 3-demethylubiquinol + S-adenosyl-L-methionine = a ubiquinol + S-adenosyl-L-homocysteine + H(+). It carries out the reaction a 3-(all-trans-polyprenyl)benzene-1,2-diol + S-adenosyl-L-methionine = a 2-methoxy-6-(all-trans-polyprenyl)phenol + S-adenosyl-L-homocysteine + H(+). It functions in the pathway cofactor biosynthesis; ubiquinone biosynthesis. Its function is as follows. O-methyltransferase that catalyzes the 2 O-methylation steps in the ubiquinone biosynthetic pathway. This is Ubiquinone biosynthesis O-methyltransferase from Rhodopseudomonas palustris (strain BisB5).